The following is a 78-amino-acid chain: Large ribosomal subunit protein bL28 (78 aa).

Residues 1-24 are disordered; sequence MSRVCQVTGKRPAVGNNRSHANNA.

Belongs to the bacterial ribosomal protein bL28 family.

This chain is Large ribosomal subunit protein bL28, found in Aeromonas salmonicida (strain A449).